The following is a 274-amino-acid chain: NH(3)-dependent NAD(+) synthetase (274 aa).

46 to 53 (GISGGQDS) lines the ATP pocket. D52 serves as a coordination point for Mg(2+). Deamido-NAD(+) is bound at residue R140. An ATP-binding site is contributed by T160. Residue E165 coordinates Mg(2+). Deamido-NAD(+)-binding residues include K173 and D180. ATP contacts are provided by K189 and T211. Residue 260 to 261 (HK) coordinates deamido-NAD(+).

This sequence belongs to the NAD synthetase family. Homodimer.

The enzyme catalyses deamido-NAD(+) + NH4(+) + ATP = AMP + diphosphate + NAD(+) + H(+). It functions in the pathway cofactor biosynthesis; NAD(+) biosynthesis; NAD(+) from deamido-NAD(+) (ammonia route): step 1/1. Functionally, catalyzes the ATP-dependent amidation of deamido-NAD to form NAD. Uses ammonia as a nitrogen source. The protein is NH(3)-dependent NAD(+) synthetase of Sodalis glossinidius (strain morsitans).